The chain runs to 880 residues: Pyruvate, phosphate dikinase (880 aa).

Positions 1-348 are N-terminal; the sequence is MNKLIYYFGN…LYILQTRTAK (348 aa). Residue Arg-97 participates in ATP binding. The segment at 349–405 is linker 1; the sequence is RTAIAAINIAVQMVEEKLISKEQALMRIDPESLNQLLHTRIDYSKKLTAIAEGLPAS. A central region spans residues 406 to 503; sequence PGAATGIVVF…VIKQGDIITI (98 aa). At Thr-458 the chain carries Phosphothreonine; by PDRP1. The active-site Tele-phosphohistidine intermediate is His-460. The linker 2 stretch occupies residues 504–538; the sequence is DGGSGKIFLGEMPLIQPTFSEESTLILDWADEISS. The tract at residues 539-879 is C-terminal; sequence LKVRANAETV…AAAQAKIKQG (341 aa). Positions 566, 622, 750, 771, 772, 773, and 774 each coordinate substrate. Residue Glu-750 coordinates Mg(2+). Asp-774 contacts Mg(2+). Cys-836 acts as the Proton donor in catalysis.

Belongs to the PEP-utilizing enzyme family. In terms of assembly, homodimer. It depends on Mg(2+) as a cofactor. Phosphorylation of Thr-458 in the dark inactivates the enzyme. Dephosphorylation upon light stimulation reactivates the enzyme.

The catalysed reaction is pyruvate + phosphate + ATP = phosphoenolpyruvate + AMP + diphosphate + H(+). Activated by light-induced dephosphorylation. Inhibited by dark-induced phosphorylation. Both reactions are catalyzed by PDRP1. In terms of biological role, catalyzes the reversible phosphorylation of pyruvate and phosphate. The chain is Pyruvate, phosphate dikinase (ppdK) from Rickettsia typhi (strain ATCC VR-144 / Wilmington).